The following is a 319-amino-acid chain: Epoxyqueuosine reductase (319 aa).

The active-site Proton donor is D146. Residues 188–220 (ASLPADQPARSLCGHCQRCLPACPTAAITEPFV) form the 4Fe-4S ferredoxin-type domain. C200, C203, C206, C210, C226, C250, C253, and C257 together coordinate [4Fe-4S] cluster.

It belongs to the QueG family. Monomer. Cob(II)alamin serves as cofactor. [4Fe-4S] cluster is required as a cofactor.

It is found in the cytoplasm. The enzyme catalyses epoxyqueuosine(34) in tRNA + AH2 = queuosine(34) in tRNA + A + H2O. Its pathway is tRNA modification; tRNA-queuosine biosynthesis. Its function is as follows. Catalyzes the conversion of epoxyqueuosine (oQ) to queuosine (Q), which is a hypermodified base found in the wobble positions of tRNA(Asp), tRNA(Asn), tRNA(His) and tRNA(Tyr). In Synechococcus sp. (strain RCC307), this protein is Epoxyqueuosine reductase.